The following is a 276-amino-acid chain: MEPLILTAAITGAETTRADQPNLPITPEEQAKEAKACFEAGARVIHLHIREDDGRPSQRLDRFQEAISAIREVVPEIIIQISTGGAVGESFDKRLAPLALKPEMATLNAGTLNFGDDIFINHPADIIRLAEAFKQYNVVPEVEVYESGMVDAVARLIKKGIITQNPLHIQFVLGVPGGMSGKPKNLMYMMEHLKEEIPTATWAVAGIGRWHIPTSLIAMVTGGHIRCGFEDNIFYHKGVIAESNAQLVARLARIAKEIGRPLATPEQAREILALNK.

E14 is a (5S)-5-amino-3-oxohexanoate binding site. Residues H46 and H48 each coordinate Zn(2+). (5S)-5-amino-3-oxohexanoate-binding residues include S82, G85, T106, and N108. E230 provides a ligand contact to Zn(2+).

Belongs to the BKACE family. Kce subfamily. Homotetramer. It depends on Zn(2+) as a cofactor.

The enzyme catalyses (5S)-5-amino-3-oxohexanoate + acetyl-CoA = (3S)-3-aminobutanoyl-CoA + acetoacetate. Its pathway is amino-acid degradation; L-lysine degradation via acetate pathway. Its function is as follows. Involved in the anaerobic fermentation of lysine. Catalyzes the reversible reaction between 3-keto-5-aminohexanoate (KAH) and acetyl-CoA to form 3-aminobutyryl-CoA and acetoacetate. The reaction involves the deprotonation of KAH, the nucleophilic addition onto acetyl-CoA and the intramolecular transfer of the CoA moiety. This is 3-keto-5-aminohexanoate cleavage enzyme from Cloacimonas acidaminovorans (strain Evry).